The following is a 336-amino-acid chain: Flavonoid 6-O-methyltransferase 4 (336 aa).

Positions 140 and 203 each coordinate S-adenosyl-L-methionine. The active-site Proton acceptor is histidine 241.

This sequence belongs to the class I-like SAM-binding methyltransferase superfamily. Cation-independent O-methyltransferase family. As to quaternary structure, homodimer. In terms of tissue distribution, expressed in leaves.

The enzyme catalyses ladanein + S-adenosyl-L-methionine = salvigenin + S-adenosyl-L-homocysteine + H(+). It carries out the reaction scutellarein 7-methyl ether + S-adenosyl-L-methionine = cirsimaritin + S-adenosyl-L-homocysteine + H(+). The protein operates within flavonoid metabolism. Functionally, flavonoid 6-O-methyltransferase involved in the biosynthesis of polymethoxylated flavonoids natural products such as nevadensin and salvigenin (SALV), aroma compounds which contribute to the flavor of sweet basil, and exhibit pharmacological activities such as anti-allergic, anti-oxidant, antibacterial, anti-proliferative, and anti-inflammatory effects. Catalyzes S-adenosylmethionine-dependent regioselective 6-O-methylation of flavonoids; active on various hydroxylated flavonoid substrates, including scutellarein-7-methyl ether (SCU7Me) and ladanein (LAD). The chain is Flavonoid 6-O-methyltransferase 4 from Ocimum basilicum (Sweet basil).